The following is a 97-amino-acid chain: Large ribosomal subunit protein uL30m (97 aa).

This sequence belongs to the universal ribosomal protein uL30 family. Component of the mitochondrial large ribosomal subunit (mt-LSU). Mature yeast 74S mitochondrial ribosomes consist of a small (37S) and a large (54S) subunit. The 37S small subunit contains a 15S ribosomal RNA (15S mt-rRNA) and at least 32 different proteins. The 54S large subunit contains a 21S rRNA (21S mt-rRNA) and at least 45 different proteins.

It localises to the mitochondrion. Component of the mitochondrial ribosome (mitoribosome), a dedicated translation machinery responsible for the synthesis of mitochondrial genome-encoded proteins, including at least some of the essential transmembrane subunits of the mitochondrial respiratory chain. The mitoribosomes are attached to the mitochondrial inner membrane and translation products are cotranslationally integrated into the membrane. This is Large ribosomal subunit protein uL30m (mrpl33) from Schizosaccharomyces pombe (strain 972 / ATCC 24843) (Fission yeast).